The chain runs to 173 residues: NADH-quinone oxidoreductase subunit I 2 (173 aa).

2 4Fe-4S ferredoxin-type domains span residues 41-73 and 83-112; these read IVLT…LAKA and EYFR…LTPD. C53, C56, C59, C63, C92, C95, C98, and C102 together coordinate [4Fe-4S] cluster. The segment covering 153-163 has biased composition (basic and acidic residues); it reads GKDKGEAEHEA. The interval 153–173 is disordered; the sequence is GKDKGEAEHEAPPVNLKGLLP.

The protein belongs to the complex I 23 kDa subunit family. As to quaternary structure, NDH-1 is composed of 14 different subunits. Subunits NuoA, H, J, K, L, M, N constitute the membrane sector of the complex. It depends on [4Fe-4S] cluster as a cofactor.

The protein resides in the cell inner membrane. It catalyses the reaction a quinone + NADH + 5 H(+)(in) = a quinol + NAD(+) + 4 H(+)(out). In terms of biological role, NDH-1 shuttles electrons from NADH, via FMN and iron-sulfur (Fe-S) centers, to quinones in the respiratory chain. The immediate electron acceptor for the enzyme in this species is believed to be ubiquinone. Couples the redox reaction to proton translocation (for every two electrons transferred, four hydrogen ions are translocated across the cytoplasmic membrane), and thus conserves the redox energy in a proton gradient. The polypeptide is NADH-quinone oxidoreductase subunit I 2 (Rhodopseudomonas palustris (strain ATCC BAA-98 / CGA009)).